We begin with the raw amino-acid sequence, 489 residues long: UDP-N-acetylmuramoylalanine--D-glutamate ligase (489 aa).

126-132 (GTNGKTT) is an ATP binding site.

Belongs to the MurCDEF family.

The protein localises to the cytoplasm. It catalyses the reaction UDP-N-acetyl-alpha-D-muramoyl-L-alanine + D-glutamate + ATP = UDP-N-acetyl-alpha-D-muramoyl-L-alanyl-D-glutamate + ADP + phosphate + H(+). The protein operates within cell wall biogenesis; peptidoglycan biosynthesis. Functionally, cell wall formation. Catalyzes the addition of glutamate to the nucleotide precursor UDP-N-acetylmuramoyl-L-alanine (UMA). The protein is UDP-N-acetylmuramoylalanine--D-glutamate ligase of Mycobacterium avium (strain 104).